The chain runs to 383 residues: S-adenosylmethionine synthase (383 aa).

ATP is bound at residue His15. Asp17 contacts Mg(2+). Residue Glu43 coordinates K(+). Residues Glu56 and Gln99 each coordinate L-methionine. Residues 99–109 (QSPDINQGVDR) form a flexible loop region. ATP-binding positions include 164–166 (DAK), 230–231 (RF), Asp239, 245–246 (RK), Ala262, and Lys266. L-methionine is bound at residue Asp239. Lys270 contributes to the L-methionine binding site.

The protein belongs to the AdoMet synthase family. In terms of assembly, homotetramer; dimer of dimers. The cofactor is Mg(2+). K(+) serves as cofactor.

It localises to the cytoplasm. The catalysed reaction is L-methionine + ATP + H2O = S-adenosyl-L-methionine + phosphate + diphosphate. Its pathway is amino-acid biosynthesis; S-adenosyl-L-methionine biosynthesis; S-adenosyl-L-methionine from L-methionine: step 1/1. Catalyzes the formation of S-adenosylmethionine (AdoMet) from methionine and ATP. The overall synthetic reaction is composed of two sequential steps, AdoMet formation and the subsequent tripolyphosphate hydrolysis which occurs prior to release of AdoMet from the enzyme. The chain is S-adenosylmethionine synthase from Shewanella baltica (strain OS155 / ATCC BAA-1091).